An 82-amino-acid chain; its full sequence is Escargot/snail protein homolog (82 aa).

4 C2H2-type zinc fingers span residues 1-5 (HLQFH), 18-40 (FSCK…IRTH), 44-66 (CKCD…IRTH), and 72-82 (FSCQHCHRAFA).

This sequence belongs to the snail C2H2-type zinc-finger protein family.

It localises to the nucleus. The polypeptide is Escargot/snail protein homolog (Bradysia coprophila (Dark-winged fungus gnat)).